A 212-amino-acid polypeptide reads, in one-letter code: Nuclear transcription factor Y subunit C-7 (212 aa).

Polar residues predominate over residues M1–H10. Disordered regions lie at residues M1–P23 and E190–N212.

Belongs to the NFYC/HAP5 subunit family. As to quaternary structure, heterotrimeric transcription factor composed of three components, NF-YA, NF-YB and NF-YC. NF-YB and NF-YC must interact and dimerize for NF-YA association and DNA binding. Expressed in flowers.

It is found in the nucleus. Stimulates the transcription of various genes by recognizing and binding to a CCAAT motif in promoters. This is Nuclear transcription factor Y subunit C-7 (NFYC7) from Arabidopsis thaliana (Mouse-ear cress).